The sequence spans 311 residues: Fluoride export protein 1 (311 aa).

The Cytoplasmic portion of the chain corresponds to 1 to 6 (MLLTQS). The helical transmembrane segment at 7–25 (YFCIMSMLGTLARLGLTAL) threads the bilayer. Over 26-29 (NTYP) the chain is Extracellular. Residues 30-50 (GAPFSGLLWVQFVGCVIMGFC) form a helical membrane-spanning segment. Residues 51-65 (QTESVFFPRPKHNAT) lie on the Cytoplasmic side of the membrane. The chain crosses the membrane as a helical span at residues 66-86 (FLLAITTGFCGSLTTFSSWML). Residues 87 to 106 (QMFTGMANLDPFERRGRGYS) lie on the Extracellular side of the membrane. A helical transmembrane segment spans residues 107 to 127 (FLSVVSDFMVTMCIAMSSLIW). Topologically, residues 128–154 (GKQIGKTTGQWRIGKVAFAWPIPAHTH) are cytoplasmic. The helical transmembrane segment at 155–175 (IVVRVLLLLLSICFFVGAAFY) threads the bilayer. Topologically, residues 176–186 (TAYTTNVTHRG) are extracellular. N181 carries N-linked (GlcNAc...) asparagine glycosylation. A helical transmembrane segment spans residues 187-207 (IGFSLIFSPFAALTRLYLARF). Residues 208–212 (LNSPQ) lie on the Cytoplasmic side of the membrane. A helical transmembrane segment spans residues 213–233 (YFIPYGTLCANVFATLLLSIM). Topologically, residues 234–250 (YMIPQITHCTPVSRSVM) are extracellular. Residues 251–268 (YGIQNGFCAVLSTLSTFS) form a helical membrane-spanning segment. At 269–278 (NELHTMPIKR) the chain is on the cytoplasmic side. The helical transmembrane segment at 279 to 299 (AYIYCIISVAISFSICVIVDG) threads the bilayer. The Extracellular portion of the chain corresponds to 300-311 (ATAWGHGYTEKY).

This sequence belongs to the fluoride channel Fluc/FEX (TC 1.A.43) family.

It is found in the cell membrane. It carries out the reaction fluoride(in) = fluoride(out). Fluoride channel required for the rapid expulsion of cytoplasmic fluoride. This chain is Fluoride export protein 1 (fex1), found in Schizosaccharomyces pombe (strain 972 / ATCC 24843) (Fission yeast).